The following is a 236-amino-acid chain: Uridylate kinase (236 aa).

12–15 (KLSG) serves as a coordination point for ATP. The tract at residues 20–25 (GEKGFG) is involved in allosteric activation by GTP. Residue glycine 54 coordinates UMP. The ATP site is built by glycine 55 and arginine 59. Residues aspartate 72 and 133 to 140 (TGNPYFST) contribute to the UMP site. Asparagine 161, tyrosine 166, and aspartate 169 together coordinate ATP.

It belongs to the UMP kinase family. Homohexamer.

The protein localises to the cytoplasm. It catalyses the reaction UMP + ATP = UDP + ADP. It functions in the pathway pyrimidine metabolism; CTP biosynthesis via de novo pathway; UDP from UMP (UMPK route): step 1/1. With respect to regulation, allosterically activated by GTP. Inhibited by UTP. Catalyzes the reversible phosphorylation of UMP to UDP. This chain is Uridylate kinase, found in Alkaliphilus metalliredigens (strain QYMF).